Reading from the N-terminus, the 182-residue chain is UPF0149 protein PM1723 (182 aa).

It belongs to the UPF0149 family.

The polypeptide is UPF0149 protein PM1723 (Pasteurella multocida (strain Pm70)).